We begin with the raw amino-acid sequence, 293 residues long: Eukaryotic translation initiation factor 3 subunit F (293 aa).

Ala-2 bears the N-acetylalanine mark. The region spanning 28–159 (ARIHPLVIFN…IKAFVSSNLS (132 aa)) is the MPN domain.

This sequence belongs to the eIF-3 subunit F family. In terms of assembly, component of the eukaryotic translation initiation factor 3 (eIF-3) complex. Binds to TIF3E1 and TIF3H1. In terms of tissue distribution, expressed in inflorescences, leaves, stems, siliques, roots and seedlings. Accumulates at highly levels in pollen grains, developing embryos and root tips.

It is found in the cytoplasm. Functionally, component of the eukaryotic translation initiation factor 3 (eIF-3) complex, which is involved in protein synthesis of a specialized repertoire of mRNAs and, together with other initiation factors, stimulates binding of mRNA and methionyl-tRNAi to the 40S ribosome. The eIF-3 complex specifically targets and initiates translation of a subset of mRNAs involved in cell proliferation (Potential). Involved in cell growth and differentiation, especially during embryogenesis and male gametophyte germination. Regulates sensitivity to sugars (e.g. sucrose). The polypeptide is Eukaryotic translation initiation factor 3 subunit F (TIF3F1) (Arabidopsis thaliana (Mouse-ear cress)).